The primary structure comprises 562 residues: Cell division protein FtsZ (562 aa).

Residues 23–27 (GAGGN), 110–112 (GTG), glutamate 141, arginine 145, and aspartate 189 each bind GTP. Low complexity predominate over residues 404 to 413 (PAAARPAQQP). Disordered stretches follow at residues 404-428 (PAAA…RLDP) and 462-562 (ETAQ…RQAN). The span at 418-428 (FRPDPQLRLDP) shows a compositional bias: basic and acidic residues. 2 stretches are compositionally biased toward low complexity: residues 464–486 (AQAA…QPQR) and 500–510 (GLLRRPAAAQP).

Belongs to the FtsZ family. Homodimer. Polymerizes to form a dynamic ring structure in a strictly GTP-dependent manner. Interacts directly with several other division proteins. Interacts with FtsZ-like protein (also called FtsZm).

The protein resides in the cytoplasm. In terms of biological role, essential cell division protein that forms a contractile ring structure (Z ring) at the future cell division site. The regulation of the ring assembly controls the timing and the location of cell division. One of the functions of the FtsZ ring is to recruit other cell division proteins to the septum to produce a new cell wall between the dividing cells. Binds GTP and shows GTPase activity. Mild overexpression impairs cell division, leading to very elongated cells. Isolated protein forms filaments and bundles in the presence of GTP. This chain is Cell division protein FtsZ, found in Magnetospirillum gryphiswaldense (strain DSM 6361 / JCM 21280 / NBRC 15271 / MSR-1).